The following is a 498-amino-acid chain: Glycerol kinase (498 aa).

An ADP-binding site is contributed by Thr-12. ATP-binding residues include Thr-12, Thr-13, and Ser-14. Thr-12 is a binding site for sn-glycerol 3-phosphate. Arg-16 lines the ADP pocket. The sn-glycerol 3-phosphate site is built by Arg-82, Glu-83, Tyr-134, and Asp-243. Positions 82, 83, 134, 243, and 244 each coordinate glycerol. Residues Thr-265 and Gly-308 each coordinate ADP. 4 residues coordinate ATP: Thr-265, Gly-308, Gln-312, and Gly-409. 2 residues coordinate ADP: Gly-409 and Asn-413.

Belongs to the FGGY kinase family. Homotetramer and homodimer (in equilibrium).

The enzyme catalyses glycerol + ATP = sn-glycerol 3-phosphate + ADP + H(+). Its pathway is polyol metabolism; glycerol degradation via glycerol kinase pathway; sn-glycerol 3-phosphate from glycerol: step 1/1. Activated by phosphorylation and inhibited by fructose 1,6-bisphosphate (FBP). Its function is as follows. Key enzyme in the regulation of glycerol uptake and metabolism. Catalyzes the phosphorylation of glycerol to yield sn-glycerol 3-phosphate. This is Glycerol kinase from Clostridium botulinum (strain ATCC 19397 / Type A).